Consider the following 509-residue polypeptide: Probable basic-leucine zipper transcription factor H (509 aa).

The disordered stretch occupies residues 1–42 (MMNSPRSLDSSDGSVDSSSVYSGTSSFGSSFTSSTGSGFTNS). Over residues 10-39 (SSDGSVDSSSVYSGTSSFGSSFTSSTGSGF) the composition is skewed to low complexity. A bZIP domain is found at 50 to 113 (AKKKKIRQMQ…NENYLKINQL (64 aa)). Residues 51-77 (KKKKIRQMQNRQSAAQYRERKKEYLEK) form a basic motif region. A leucine-zipper region spans residues 78 to 99 (LETIVDNLESDRNQLLQQTKQL). Disordered stretches follow at residues 134 to 185 (LLSK…SNNG), 223 to 275 (FSHL…SRFN), 290 to 414 (IENV…IINN), and 465 to 509 (SNNN…GIPK). 6 stretches are compositionally biased toward low complexity: residues 226 to 248 (LQQQ…SPIP), 255 to 269 (PIQQ…QNIN), 292 to 350 (NVNN…SNRS), 361 to 414 (QQQQ…IINN), 465 to 483 (SNNN…NSPS), and 490 to 509 (NGGI…GIPK).

This sequence belongs to the bZIP family.

Its subcellular location is the nucleus. Its function is as follows. Probable transcriptional regulator. The protein is Probable basic-leucine zipper transcription factor H (bzpH) of Dictyostelium discoideum (Social amoeba).